The chain runs to 439 residues: Forkhead box protein J1-B (439 aa).

The fork-head DNA-binding region spans 124–218; sequence KPPYSYATLI…MNGAMKKRRL (95 aa).

Belongs to the FOXJ1 family.

Its subcellular location is the nucleus. In terms of biological role, key transcription factor required for motile ciliogenesis. Activates genes essential for motile cilia formation and function. In Xenopus laevis (African clawed frog), this protein is Forkhead box protein J1-B (foxj1-b).